The following is a 535-amino-acid chain: GMP synthase [glutamine-hydrolyzing] (535 aa).

The Glutamine amidotransferase type-1 domain maps to 24-217; the sequence is KILIVDFGSQ…VRKVAGLTGD (194 aa). The Nucleophile role is filled by C101. Catalysis depends on residues H191 and E193. Residues 218–410 enclose the GMPS ATP-PPase domain; the sequence is WTMRAFREEA…LGLPEIFVGR (193 aa). Residue 245 to 251 coordinates ATP; the sequence is SGGVDSS.

Homodimer.

The enzyme catalyses XMP + L-glutamine + ATP + H2O = GMP + L-glutamate + AMP + diphosphate + 2 H(+). The protein operates within purine metabolism; GMP biosynthesis; GMP from XMP (L-Gln route): step 1/1. Functionally, catalyzes the synthesis of GMP from XMP. The polypeptide is GMP synthase [glutamine-hydrolyzing] (Nitrobacter winogradskyi (strain ATCC 25391 / DSM 10237 / CIP 104748 / NCIMB 11846 / Nb-255)).